A 236-amino-acid chain; its full sequence is Small ribosomal subunit protein uS2c (236 aa).

It belongs to the universal ribosomal protein uS2 family.

It is found in the plastid. It localises to the chloroplast. The protein is Small ribosomal subunit protein uS2c (rps2) of Cucumis sativus (Cucumber).